Reading from the N-terminus, the 172-residue chain is Translation initiation factor IF-3 (172 aa).

Belongs to the IF-3 family. In terms of assembly, monomer.

Its subcellular location is the cytoplasm. In terms of biological role, IF-3 binds to the 30S ribosomal subunit and shifts the equilibrium between 70S ribosomes and their 50S and 30S subunits in favor of the free subunits, thus enhancing the availability of 30S subunits on which protein synthesis initiation begins. This Oceanobacillus iheyensis (strain DSM 14371 / CIP 107618 / JCM 11309 / KCTC 3954 / HTE831) protein is Translation initiation factor IF-3.